The primary structure comprises 291 residues: Halorhodopsin (291 aa).

Over 1 to 30 (MTETLPPVTESAVALQAEVTQRELFEFVLN) the chain is Extracellular. A helical membrane pass occupies residues 31–56 (DPLLASSLYINIALAGLSILLFVFMT). The Cytoplasmic portion of the chain corresponds to 57 to 62 (RGLDDP). The helical transmembrane segment at 63 to 86 (RAKLIAVSTILVPVVSIASYTGLA) threads the bilayer. Topologically, residues 87–120 (SGLTISVLEMPAGHFAEGSSVMLGGEEVDGVVTM) are extracellular. Residues 121–142 (WGRYLTWALSTPMILLALGLLA) traverse the membrane as a helical segment. Residues 143–145 (GSN) are Cytoplasmic-facing. The chain crosses the membrane as a helical span at residues 146 to 169 (ATKLFTAITFDIAMCVTGLAAALT). At 170–172 (TSS) the chain is on the extracellular side. A helical membrane pass occupies residues 173 to 195 (HLMRWFWYAISCACFLVVLYILL). Residues 196–207 (VEWAQDAKAAGT) are Cytoplasmic-facing. The helical transmembrane segment at 208-231 (ADMFNTLKLLTVVMWLGYPIVWAL) threads the bilayer. Over 232 to 240 (GVEGIAVLP) the chain is Extracellular. Residues 241-269 (VGVTSWGYSFLDIVAKYIFAFLLLNYLTS) form a helical membrane-spanning segment. Residue K256 is modified to N6-(retinylidene)lysine. Over 270–291 (NESVVSGSILDVPSASGTPADD) the chain is Cytoplasmic.

The protein belongs to the archaeal/bacterial/fungal opsin family.

The protein localises to the cell membrane. Light-driven anion pump. Binding affinity for the anions is in the order, bromide &gt; chloride &gt; nitrate &gt; azide &gt; bromate and binding is pH dependent. The protein is Halorhodopsin (hop) of Natronomonas pharaonis (Natronobacterium pharaonis).